A 133-amino-acid chain; its full sequence is Small ribosomal subunit protein uS8 (133 aa).

Belongs to the universal ribosomal protein uS8 family. Part of the 30S ribosomal subunit. Contacts proteins S5 and S12.

Functionally, one of the primary rRNA binding proteins, it binds directly to 16S rRNA central domain where it helps coordinate assembly of the platform of the 30S subunit. In Prochlorococcus marinus (strain MIT 9515), this protein is Small ribosomal subunit protein uS8.